Reading from the N-terminus, the 456-residue chain is Argininosuccinate lyase (456 aa).

This sequence belongs to the lyase 1 family. Argininosuccinate lyase subfamily.

The protein resides in the cytoplasm. It carries out the reaction 2-(N(omega)-L-arginino)succinate = fumarate + L-arginine. It participates in amino-acid biosynthesis; L-arginine biosynthesis; L-arginine from L-ornithine and carbamoyl phosphate: step 3/3. This Listeria monocytogenes serotype 4b (strain CLIP80459) protein is Argininosuccinate lyase.